The following is a 289-amino-acid chain: 4-hydroxy-tetrahydrodipicolinate synthase (289 aa).

Threonine 43 serves as a coordination point for pyruvate. Tyrosine 131 functions as the Proton donor/acceptor in the catalytic mechanism. Lysine 160 functions as the Schiff-base intermediate with substrate in the catalytic mechanism. Valine 200 is a pyruvate binding site.

It belongs to the DapA family. Homotetramer; dimer of dimers.

The protein localises to the cytoplasm. The enzyme catalyses L-aspartate 4-semialdehyde + pyruvate = (2S,4S)-4-hydroxy-2,3,4,5-tetrahydrodipicolinate + H2O + H(+). It functions in the pathway amino-acid biosynthesis; L-lysine biosynthesis via DAP pathway; (S)-tetrahydrodipicolinate from L-aspartate: step 3/4. In terms of biological role, catalyzes the condensation of (S)-aspartate-beta-semialdehyde [(S)-ASA] and pyruvate to 4-hydroxy-tetrahydrodipicolinate (HTPA). This Methanococcus maripaludis (strain C5 / ATCC BAA-1333) protein is 4-hydroxy-tetrahydrodipicolinate synthase.